The chain runs to 282 residues: Serine/arginine-rich splicing factor 8 (282 aa).

At serine 2 the chain carries N-acetylserine. A phosphoserine mark is found at serine 2 and serine 26. The RRM domain maps to 14–92 (ITLKVDNLTY…RELRVQVARY (79 aa)). A disordered region spans residues 91 to 282 (RYGRRDLPRS…SPEEEGQMSS (192 aa)). The segment covering 93 to 107 (GRRDLPRSRQGEPRG) has biased composition (basic and acidic residues). Basic residues-rich tracts occupy residues 116-136 (RRSR…RSRS) and 144-154 (SRSRSRYRGSR). Composition is skewed to low complexity over residues 155-177 (YSRS…PYSR) and 185-200 (YGGS…NSRY). Phosphoserine is present on residues serine 156, serine 158, serine 171, serine 173, and serine 196. The segment covering 201-210 (SRYHSSRSHS) has biased composition (basic residues). Low complexity-rich tracts occupy residues 211–227 (KSGS…SKSS) and 234–255 (SSSV…SPPR). A compositionally biased stretch (basic residues) spans 256–271 (VSKRKSKSRSRSKRPP). Serine 273 carries the post-translational modification Phosphoserine.

Belongs to the splicing factor SR family. In terms of tissue distribution, strongly expressed in pancreas, spleen and prostate. Weakly expressed in lung, liver and thymus.

The protein resides in the nucleus. Involved in pre-mRNA alternative splicing. This chain is Serine/arginine-rich splicing factor 8 (SRSF8), found in Homo sapiens (Human).